The following is a 113-amino-acid chain: UPF0321 protein C569.02c (113 aa).

A signal peptide spans 1-17 (MLLLFCICCAFIKLVLA). 3 N-linked (GlcNAc...) asparagine glycosylation sites follow: N20, N39, and N65.

This sequence belongs to the UPF0321 family.

This Schizosaccharomyces pombe (strain 972 / ATCC 24843) (Fission yeast) protein is UPF0321 protein C569.02c.